The primary structure comprises 352 residues: Pollen-specific protein SF21 (352 aa).

This sequence belongs to the NDRG family. Pollen.

The chain is Pollen-specific protein SF21 (SF21) from Helianthus annuus (Common sunflower).